A 215-amino-acid polypeptide reads, in one-letter code: RNA pyrophosphohydrolase (215 aa).

The Nudix hydrolase domain maps to 6-149 (GFRPNVGIIL…KRDVYQLALT (144 aa)). A Nudix box motif is present at residues 38-59 (GGIKYGETPMQAMYRELHEETG).

Belongs to the Nudix hydrolase family. RppH subfamily. It depends on a divalent metal cation as a cofactor.

Functionally, accelerates the degradation of transcripts by removing pyrophosphate from the 5'-end of triphosphorylated RNA, leading to a more labile monophosphorylated state that can stimulate subsequent ribonuclease cleavage. The polypeptide is RNA pyrophosphohydrolase (Burkholderia multivorans (strain ATCC 17616 / 249)).